The primary structure comprises 335 residues: UPF0353 protein MAP_3435c (335 aa).

2 helical membrane-spanning segments follow: residues 18 to 38 and 67 to 87; these read WFFLALLAVLLVIGLYVVQQF and VPTILLATSLVLLTTAMAGPT. Residues 98–294 form the VWFA domain; it reads VVMLVIDVSE…DSLKNVYSTL (197 aa). The chain crosses the membrane as a helical span at residues 309 to 329; the sequence is MAWMLLGAVVLAGAVLAGLLL.

The protein belongs to the UPF0353 family.

It is found in the cell membrane. This is UPF0353 protein MAP_3435c from Mycolicibacterium paratuberculosis (strain ATCC BAA-968 / K-10) (Mycobacterium paratuberculosis).